Consider the following 79-residue polypeptide: Small ribosomal subunit protein bS16 (79 aa).

It belongs to the bacterial ribosomal protein bS16 family.

The chain is Small ribosomal subunit protein bS16 from Oleidesulfovibrio alaskensis (strain ATCC BAA-1058 / DSM 17464 / G20) (Desulfovibrio alaskensis).